Here is a 48-residue protein sequence, read N- to C-terminus: MRIKINLQCSHCGSKNYLTSKNKKNHPEKIQVPKYCPKERKVTLHIES.

The protein belongs to the bacterial ribosomal protein bL33 family.

The sequence is that of Large ribosomal subunit protein bL33 from Streptococcus mutans serotype c (strain ATCC 700610 / UA159).